A 419-amino-acid chain; its full sequence is UDP-N-acetylglucosamine 1-carboxyvinyltransferase (419 aa).

Position 22–23 (22–23 (KN)) interacts with phosphoenolpyruvate. Residue Arg-95 coordinates UDP-N-acetyl-alpha-D-glucosamine. The active-site Proton donor is the Cys-119. Position 119 is a 2-(S-cysteinyl)pyruvic acid O-phosphothioketal (Cys-119). Residues 164–167 (KVSV), Asp-308, and Ile-330 each bind UDP-N-acetyl-alpha-D-glucosamine.

Belongs to the EPSP synthase family. MurA subfamily.

It is found in the cytoplasm. It carries out the reaction phosphoenolpyruvate + UDP-N-acetyl-alpha-D-glucosamine = UDP-N-acetyl-3-O-(1-carboxyvinyl)-alpha-D-glucosamine + phosphate. Its pathway is cell wall biogenesis; peptidoglycan biosynthesis. Functionally, cell wall formation. Adds enolpyruvyl to UDP-N-acetylglucosamine. The polypeptide is UDP-N-acetylglucosamine 1-carboxyvinyltransferase (Rickettsia peacockii (strain Rustic)).